The chain runs to 565 residues: Formate--tetrahydrofolate ligase (565 aa).

65-72 (TPAGEGKT) is a binding site for ATP.

The protein belongs to the formate--tetrahydrofolate ligase family.

The enzyme catalyses (6S)-5,6,7,8-tetrahydrofolate + formate + ATP = (6R)-10-formyltetrahydrofolate + ADP + phosphate. The protein operates within one-carbon metabolism; tetrahydrofolate interconversion. The sequence is that of Formate--tetrahydrofolate ligase from Syntrophus aciditrophicus (strain SB).